The chain runs to 511 residues: Bifunctional purine biosynthesis protein PurH (511 aa).

An MGS-like domain is found at 1–145 (MKKRALVSVS…KNHKFVSVIV (145 aa)).

It belongs to the PurH family.

It catalyses the reaction (6R)-10-formyltetrahydrofolate + 5-amino-1-(5-phospho-beta-D-ribosyl)imidazole-4-carboxamide = 5-formamido-1-(5-phospho-D-ribosyl)imidazole-4-carboxamide + (6S)-5,6,7,8-tetrahydrofolate. The catalysed reaction is IMP + H2O = 5-formamido-1-(5-phospho-D-ribosyl)imidazole-4-carboxamide. Its pathway is purine metabolism; IMP biosynthesis via de novo pathway; 5-formamido-1-(5-phospho-D-ribosyl)imidazole-4-carboxamide from 5-amino-1-(5-phospho-D-ribosyl)imidazole-4-carboxamide (10-formyl THF route): step 1/1. It participates in purine metabolism; IMP biosynthesis via de novo pathway; IMP from 5-formamido-1-(5-phospho-D-ribosyl)imidazole-4-carboxamide: step 1/1. This is Bifunctional purine biosynthesis protein PurH from Bacillus anthracis (strain A0248).